A 241-amino-acid chain; its full sequence is MKILSFKDYNELSKEASKIVLNQVISKPNSVLGLATGSTPLGMYKNLIVAYQNKNIDFSKIKTFNLDEYYGLSKHNNQSYYHYMMENLFNHINIDINNINIPNGTASDILKECSDYEDKIKNYNGIDLQILGIGVNGHIGFNEPSTYFEPSTHVVTLDKKTIESNSRFFSSKEEVPTKAISMGIKTIMNAKKIILLANGKNKADAIFKTVNGKIDPNIPASILQLHNDVTLILDKDAASKL.

Residue aspartate 67 is the Proton acceptor; for enolization step of the active site. Asparagine 136 functions as the For ring-opening step in the catalytic mechanism. Histidine 138 (proton acceptor; for ring-opening step) is an active-site residue. Glutamate 143 functions as the For ring-opening step in the catalytic mechanism.

It belongs to the glucosamine/galactosamine-6-phosphate isomerase family. NagB subfamily.

The enzyme catalyses alpha-D-glucosamine 6-phosphate + H2O = beta-D-fructose 6-phosphate + NH4(+). It functions in the pathway amino-sugar metabolism; N-acetylneuraminate degradation; D-fructose 6-phosphate from N-acetylneuraminate: step 5/5. Catalyzes the reversible isomerization-deamination of glucosamine 6-phosphate (GlcN6P) to form fructose 6-phosphate (Fru6P) and ammonium ion. The sequence is that of Glucosamine-6-phosphate deaminase from Clostridium novyi (strain NT).